An 860-amino-acid chain; its full sequence is Mycobactin import ATP-binding/permease protein IrtA (860 aa).

The Cytoplasmic segment spans residues 1 to 293 (MARGIQGVMM…GRLLAPLKTT (293 aa)). An FAD-binding FR-type domain is found at 15–124 (ARDHQATVVS…LGSAGFSVPE (110 aa)). FAD is bound by residues 70–73 (RAYT), 87–91 (DVVLH), 97–98 (AS), and 238–240 (TEG). Positions 242-275 (AMGTKRGDDDKTPEVNPAPRADKPEAPAPAAAGR) are disordered. Residues 294–314 (LIISGVLQAIITLVQLAPFVL) form a helical membrane-spanning segment. One can recognise an ABC transmembrane type-1 domain in the interval 295 to 577 (IISGVLQAII…IAYGLGGIRG (283 aa)). Residues 315-335 (LVELARLLLSGASSDRLWTLG) are Periplasmic-facing. The chain crosses the membrane as a helical span at residues 336-356 (VVAISLLGTGSFLAAALTLWL). Residues 357-409 (HLVDARFARDLRTGLLTKMSRLPLGWFTARGSGSIKQLVQDDTLSLHYLITHA) are Cytoplasmic-facing. A helical membrane pass occupies residues 410-430 (IPDAVAAVIAPVAVLVYLFVV). Residues 431–433 (DWR) are Periplasmic-facing. Residues 434–454 (LALVMFVPVLIYLVLMTVMTI) traverse the membrane as a helical segment. Residues 455-525 (QSGPKIAQSQ…KKSMMDLVTR (71 aa)) lie on the Cytoplasmic side of the membrane. The chain crosses the membrane as a helical span at residues 526 to 546 (PGTFLWLIVAVGTPMITSGAM). The Periplasmic segment spans residues 547–550 (DPVD). Residues 551–571 (ILPFLLLGTTFGVRLLGIAYG) traverse the membrane as a helical segment. Residues 572–860 (LGGIRGGMLA…AAGPTGEAVR (289 aa)) lie on the Cytoplasmic side of the membrane. In terms of domain architecture, ABC transporter spans 609-842 (VVFDNVTFGY…AGRYRQLWET (234 aa)). 642–649 (GPSGSGKS) contributes to the ATP binding site.

It belongs to the ABC transporter superfamily. Siderophore-Fe(3+) uptake transporter (SIUT) (TC 3.A.1.21) family. Forms a heterodimer with IrtB. The cofactor is FAD.

It localises to the cell inner membrane. Part of the ABC transporter complex IrtAB involved in the import of iron-bound mycobactin (Fe-MBT) and carboxymycobactin (Fe-cMBT). Has a preference for Fe-MBT over Fe-cMBT. Mycobactins are then reduced by the siderophore interaction domain to facilitate iron release in the bacterial cell. Transmembrane domains (TMD) form a pore in the membrane and the ATP-binding domain (NBD) is responsible for energy generation. The polypeptide is Mycobactin import ATP-binding/permease protein IrtA (Mycolicibacterium smegmatis (strain ATCC 700084 / mc(2)155) (Mycobacterium smegmatis)).